The sequence spans 555 residues: MSEAEARPSNFIRQIIDEDLASGKHTSVHTRFPPEPNGYLHIGHAKSICLNFGIAEDYQGQCNLRFDDTNPVKEDVEFVESIKRDVEWLGFTWSGDVRYSSDYFDQLYQYAVELINKGLAYVDELTPEQMREYRGTLTAPGKNSPYRDRSVEENLALFEKMRAGGFAEGTACLRAKIDMASPFIVMRDPVLYRIKFAEHHQSGNKWCIYPMYDFTHCISDALEGITHSLCTLEFQDNRRLYDWVLDNISIDCHPRQYEFSRLNLEYTIMSKRKLNQLVTEKVVEGWDDPRMPTISGLRRRGYTAASIREFCRRIGVTKQDNNVEMMSLESCIRDDLNEHAPRAMAVLDPIKVVIENRAAGEEWLTMPNHPNNPEMGSRQVPFDSEIYIDRADFREEANKQYKRLVLGKEVRLRNAYVIKAERVEKDAEGNVTTLYCSYDAETLNKDPADGRKVKGVIHWVSVAHALPAEIRLYDRLFNVPNPAAAEDFLSTINPESLVIRQGFVEPSLADAVSDKTYQFEREGYFCADSRYSRPGALVFNRTVGLRDTWAAKATQ.

The 'HIGH' region motif lies at 34 to 44; that stretch reads PEPNGYLHIGH. ATP is bound by residues 35-37 and 41-47; these read EPN and HIGHAKS. The L-glutamine site is built by Asp-67 and Tyr-212. ATP-binding positions include Thr-231, 261–262, and 269–271; these read RL and MSK. The short motif at 268-272 is the 'KMSKS' region element; that stretch reads IMSKR.

The protein belongs to the class-I aminoacyl-tRNA synthetase family. As to quaternary structure, monomer.

The protein resides in the cytoplasm. It catalyses the reaction tRNA(Gln) + L-glutamine + ATP = L-glutaminyl-tRNA(Gln) + AMP + diphosphate. The chain is Glutamine--tRNA ligase from Yersinia pseudotuberculosis serotype O:1b (strain IP 31758).